Consider the following 274-residue polypeptide: Large ribosomal subunit protein uL2 (274 aa).

2 disordered regions span residues 21 to 59 (KVGLSKDEPEKSLTSGKKSSGGRNNHGRITTRHRGGGHK) and 224 to 274 (AMNP…QLKG). A compositionally biased stretch (low complexity) spans 32–42 (SLTSGKKSSGG). Residues 45–59 (NHGRITTRHRGGGHK) are compositionally biased toward basic residues. Basic and acidic residues predominate over residues 263 to 274 (KSSDKYIKQLKG).

This sequence belongs to the universal ribosomal protein uL2 family. In terms of assembly, part of the 50S ribosomal subunit. Forms a bridge to the 30S subunit in the 70S ribosome.

One of the primary rRNA binding proteins. Required for association of the 30S and 50S subunits to form the 70S ribosome, for tRNA binding and peptide bond formation. It has been suggested to have peptidyltransferase activity; this is somewhat controversial. Makes several contacts with the 16S rRNA in the 70S ribosome. The protein is Large ribosomal subunit protein uL2 of Wolbachia pipientis wMel.